We begin with the raw amino-acid sequence, 128 residues long: Small ribosomal subunit protein uS11 (128 aa).

The protein belongs to the universal ribosomal protein uS11 family. In terms of assembly, part of the 30S ribosomal subunit. Interacts with proteins S7 and S18. Binds to IF-3.

Its function is as follows. Located on the platform of the 30S subunit, it bridges several disparate RNA helices of the 16S rRNA. Forms part of the Shine-Dalgarno cleft in the 70S ribosome. The protein is Small ribosomal subunit protein uS11 of Acinetobacter baylyi (strain ATCC 33305 / BD413 / ADP1).